Reading from the N-terminus, the 549-residue chain is Chaperonin GroEL 5 (549 aa).

Residues 30–33 (TLGP), Lys51, 87–91 (DGTTT), Gly415, and Asp495 contribute to the ATP site.

The protein belongs to the chaperonin (HSP60) family. In terms of assembly, forms a cylinder of 14 subunits composed of two heptameric rings stacked back-to-back. Interacts with the co-chaperonin GroES.

It is found in the cytoplasm. It carries out the reaction ATP + H2O + a folded polypeptide = ADP + phosphate + an unfolded polypeptide.. Functionally, together with its co-chaperonin GroES, plays an essential role in assisting protein folding. The GroEL-GroES system forms a nano-cage that allows encapsulation of the non-native substrate proteins and provides a physical environment optimized to promote and accelerate protein folding. The sequence is that of Chaperonin GroEL 5 from Mesorhizobium japonicum (strain LMG 29417 / CECT 9101 / MAFF 303099) (Mesorhizobium loti (strain MAFF 303099)).